Here is a 710-residue protein sequence, read N- to C-terminus: Polyribonucleotide nucleotidyltransferase (710 aa).

Residues Asp489 and Asp495 each coordinate Mg(2+). Residues 556-615 (PKIDTIKIDVDKIKVVIGKGGETIDKIIAETGVKIDIDDEGNVSIYSSDQAAIDRTKEII) form the KH domain. Positions 625 to 693 (GEVYHAKVVR…EKGRVDASMK (69 aa)) constitute an S1 motif domain. Positions 691-710 (SMKALIPRPPKPEKKEEKHD) are disordered. Positions 700–710 (PKPEKKEEKHD) are enriched in basic and acidic residues.

It belongs to the polyribonucleotide nucleotidyltransferase family. The cofactor is Mg(2+).

The protein resides in the cytoplasm. It carries out the reaction RNA(n+1) + phosphate = RNA(n) + a ribonucleoside 5'-diphosphate. Its function is as follows. Involved in mRNA degradation. Catalyzes the phosphorolysis of single-stranded polyribonucleotides processively in the 3'- to 5'-direction. In Streptococcus pyogenes serotype M1, this protein is Polyribonucleotide nucleotidyltransferase.